Consider the following 256-residue polypeptide: Agamous-like MADS-box protein AGL18 (256 aa).

Residues 1–61 (MGRGRIEIKK…GKIYDFSSVC (61 aa)) form the MADS-box domain. The K-box domain occupies 94–184 (NEAVLRNDDS…RKQVEMLGRG (91 aa)). The segment at 179-232 (EMLGRGSGPKVLNERPQDSSPEADPESSSSEEDENDNEEHHSDTSLQLGLSSTG) is disordered. The segment covering 199-215 (PEADPESSSSEEDENDN) has biased composition (acidic residues). Residues 222-232 (TSLQLGLSSTG) are compositionally biased toward polar residues.

As to expression, mostly expressed in pollen, roots, flowers and siliques, and to a lower extent, in stems and leaves. Expressed in the endosperm and in developing male and female gametophytes. Also present in seedlings.

The protein resides in the nucleus. Functionally, probable transcription factor involved in the negative regulation of flowering, probably through the photoperiodic pathway. Prevents premature flowering. Downstream regulator of a subset of the MIKC* MADS-controlled genes required during pollen maturation. In Arabidopsis thaliana (Mouse-ear cress), this protein is Agamous-like MADS-box protein AGL18 (AGL18).